The chain runs to 832 residues: Adhesin AWP2 (832 aa).

The first 25 residues, 1–25 (MRKLPLFMAWKFWLICLYIIKVAST), serve as a signal peptide directing secretion. 16 N-linked (GlcNAc...) asparagine glycosylation sites follow: Asn-187, Asn-290, Asn-372, Asn-390, Asn-435, Asn-448, Asn-472, Asn-482, Asn-507, Asn-512, Asn-515, Asn-534, Asn-562, Asn-579, Asn-695, and Asn-721. The segment at 722-747 (QTTSPSMHTTSLVGSENGVSAKTVND) is disordered.

It is found in the secreted. Its subcellular location is the cell wall. Its function is as follows. Mediates cell-substrate adhesion and promotes biofilm formation. This is Adhesin AWP2 from Candida glabrata (strain ATCC 2001 / BCRC 20586 / JCM 3761 / NBRC 0622 / NRRL Y-65 / CBS 138) (Yeast).